Here is a 379-residue protein sequence, read N- to C-terminus: Serpin B5 (379 aa).

N-linked (GlcNAc...) asparagine glycans are attached at residues Asn-133, Asn-176, and Asn-361.

Belongs to the serpin family. Ov-serpin subfamily.

The protein resides in the secreted. It localises to the extracellular space. In terms of biological role, may not exhibit serine protease inhibitory activity. The protein is Serpin B5 (serpinb5) of Xenopus tropicalis (Western clawed frog).